Here is a 170-residue protein sequence, read N- to C-terminus: MENIVLIGMPLSGKSTLGREISKILKYDLIDTDTLIEKMEGKSIKEIFKIYGEDYFREKELEIINKLKKESNKVISTGGGLPIYNKNIYELKKIGFTVYLKVPLEELIKRMVKKGEDTRPLLKNNDTKFLEEMYKNRIEIYEKAHTIICNTNHEESLITIVRAYKKWKGI.

An ATP-binding site is contributed by 11-16; the sequence is LSGKST. Ser15 lines the Mg(2+) pocket. Substrate is bound by residues Asp33, Arg57, and Gly79. Arg119 serves as a coordination point for ATP. Position 137 (Arg137) interacts with substrate.

It belongs to the shikimate kinase family. As to quaternary structure, monomer. The cofactor is Mg(2+).

It localises to the cytoplasm. It carries out the reaction shikimate + ATP = 3-phosphoshikimate + ADP + H(+). It participates in metabolic intermediate biosynthesis; chorismate biosynthesis; chorismate from D-erythrose 4-phosphate and phosphoenolpyruvate: step 5/7. In terms of biological role, catalyzes the specific phosphorylation of the 3-hydroxyl group of shikimic acid using ATP as a cosubstrate. This is Shikimate kinase from Clostridium botulinum (strain 657 / Type Ba4).